We begin with the raw amino-acid sequence, 205 residues long: MELNGLRVSRETQGRLQHFALLFQKWAKTINLVAPSTLDALWHRHIADSSQIFQICPRPVTWVDLGSGGGFPGVITAIFLAELQGGWVHLVESNHKKAAFLRTALRETNARGSVHAIRIEDASAEIGDCDAISARALADLDGLIAYSAPWMLGKENCRGFFHKGRDYLREIAEARGRWEFDLIEHESAVEQESVILEISNLRRLV.

Residues glycine 66, phenylalanine 71, 119-120 (IE), and arginine 135 each bind S-adenosyl-L-methionine.

Belongs to the methyltransferase superfamily. RNA methyltransferase RsmG family.

The protein localises to the cytoplasm. The enzyme catalyses guanosine(527) in 16S rRNA + S-adenosyl-L-methionine = N(7)-methylguanosine(527) in 16S rRNA + S-adenosyl-L-homocysteine. Functionally, specifically methylates the N7 position of guanine in position 527 of 16S rRNA. The protein is Ribosomal RNA small subunit methyltransferase G of Rhizobium etli (strain ATCC 51251 / DSM 11541 / JCM 21823 / NBRC 15573 / CFN 42).